The primary structure comprises 138 residues: Phosphoribosyl-AMP cyclohydrolase (138 aa).

The disordered stretch occupies residues M1–L23. D100 provides a ligand contact to Mg(2+). Position 101 (C101) interacts with Zn(2+). 2 residues coordinate Mg(2+): D102 and D104. Positions 117 and 124 each coordinate Zn(2+).

This sequence belongs to the PRA-CH family. As to quaternary structure, homodimer. Mg(2+) serves as cofactor. It depends on Zn(2+) as a cofactor.

The protein resides in the cytoplasm. The catalysed reaction is 1-(5-phospho-beta-D-ribosyl)-5'-AMP + H2O = 1-(5-phospho-beta-D-ribosyl)-5-[(5-phospho-beta-D-ribosylamino)methylideneamino]imidazole-4-carboxamide. The protein operates within amino-acid biosynthesis; L-histidine biosynthesis; L-histidine from 5-phospho-alpha-D-ribose 1-diphosphate: step 3/9. Catalyzes the hydrolysis of the adenine ring of phosphoribosyl-AMP. The polypeptide is Phosphoribosyl-AMP cyclohydrolase (Paenarthrobacter aurescens (strain TC1)).